A 538-amino-acid polypeptide reads, in one-letter code: CTP synthase (538 aa).

The tract at residues 1-267 (MDRAKFIFVT…LTPIARRFNL (267 aa)) is amidoligase domain. Residue Ser15 participates in CTP binding. UTP is bound at residue Ser15. ATP-binding positions include 16-21 (SLGKGI) and Asp73. Positions 73 and 141 each coordinate Mg(2+). CTP is bound by residues 148–150 (DME), 188–193 (KTKPTQ), and Lys224. UTP is bound by residues 188–193 (KTKPTQ) and Lys224. One can recognise a Glutamine amidotransferase type-1 domain in the interval 292 to 538 (KIGFVGKYLS…DFIKSALSKS (247 aa)). Gly351 contributes to the L-glutamine binding site. Catalysis depends on Cys378, which acts as the Nucleophile; for glutamine hydrolysis. L-glutamine contacts are provided by residues 379–382 (LGMQ), Glu402, and Arg469. Catalysis depends on residues His513 and Glu515.

This sequence belongs to the CTP synthase family. As to quaternary structure, homotetramer.

It carries out the reaction UTP + L-glutamine + ATP + H2O = CTP + L-glutamate + ADP + phosphate + 2 H(+). It catalyses the reaction L-glutamine + H2O = L-glutamate + NH4(+). The enzyme catalyses UTP + NH4(+) + ATP = CTP + ADP + phosphate + 2 H(+). It functions in the pathway pyrimidine metabolism; CTP biosynthesis via de novo pathway; CTP from UDP: step 2/2. Its activity is regulated as follows. Allosterically activated by GTP, when glutamine is the substrate; GTP has no effect on the reaction when ammonia is the substrate. The allosteric effector GTP functions by stabilizing the protein conformation that binds the tetrahedral intermediate(s) formed during glutamine hydrolysis. Inhibited by the product CTP, via allosteric rather than competitive inhibition. Its function is as follows. Catalyzes the ATP-dependent amination of UTP to CTP with either L-glutamine or ammonia as the source of nitrogen. Regulates intracellular CTP levels through interactions with the four ribonucleotide triphosphates. The protein is CTP synthase of Helicobacter pylori (strain ATCC 700392 / 26695) (Campylobacter pylori).